A 100-amino-acid polypeptide reads, in one-letter code: Urease subunit gamma (100 aa).

Belongs to the urease gamma subunit family. As to quaternary structure, heterotrimer of UreA (gamma), UreB (beta) and UreC (alpha) subunits. Three heterotrimers associate to form the active enzyme.

The protein resides in the cytoplasm. The catalysed reaction is urea + 2 H2O + H(+) = hydrogencarbonate + 2 NH4(+). It functions in the pathway nitrogen metabolism; urea degradation; CO(2) and NH(3) from urea (urease route): step 1/1. The chain is Urease subunit gamma from Haemophilus influenzae (strain 86-028NP).